We begin with the raw amino-acid sequence, 704 residues long: MRFWTSAAAAEILRRDEHVVRKLLNPRVYSKLVNAFSETETKLRSLCEDSNPQLKNAVSVFQQAVDSGSSLAFAGNNLMAKLVRSRNHELAFSFYRKMLETDTFINFVSLSGLLECYVQMRKTGFAFGVLALMLKRGFAFNVYNHNILLKGLCRNLECGKAVSLLREMRRNSLMPDVFSYNTVIRGFCEGKELEKALELANEMKGSGCSWSLVTWGILIDAFCKAGKMDEAMGFLKEMKFMGLEADLVVYTSLIRGFCDCGELDRGKALFDEVLERGDSPCAITYNTLIRGFCKLGQLKEASEIFEFMIERGVRPNVYTYTGLIDGLCGVGKTKEALQLLNLMIEKDEEPNAVTYNIIINKLCKDGLVADAVEIVELMKKRRTRPDNITYNILLGGLCAKGDLDEASKLLYLMLKDSSYTDPDVISYNALIHGLCKENRLHQALDIYDLLVEKLGAGDRVTTNILLNSTLKAGDVNKAMELWKQISDSKIVRNSDTYTAMIDGFCKTGMLNVAKGLLCKMRVSELQPSVFDYNCLLSSLCKEGSLDQAWRLFEEMQRDNNFPDVVSFNIMIDGSLKAGDIKSAESLLVGMSRAGLSPDLFTYSKLINRFLKLGYLDEAISFFDKMVDSGFEPDAHICDSVLKYCISQGETDKLTELVKKLVDKDIVLDKELTCTVMDYMCNSSANMDLAKRLLRVTDDKEERDK.

PPR repeat units follow at residues 71–105 (LAFAGNNLMAKLVRSRNHELAFSFYRKMLETDTFI), 106–140 (NFVSLSGLLECYVQMRKTGFAFGVLALMLKRGFAF), 141–175 (NVYNHNILLKGLCRNLECGKAVSLLREMRRNSLMP), 176–210 (DVFSYNTVIRGFCEGKELEKALELANEMKGSGCSW), 211–245 (SLVTWGILIDAFCKAGKMDEAMGFLKEMKFMGLEA), 246–280 (DLVVYTSLIRGFCDCGELDRGKALFDEVLERGDSP), 281–315 (CAITYNTLIRGFCKLGQLKEASEIFEFMIERGVRP), 316–350 (NVYTYTGLIDGLCGVGKTKEALQLLNLMIEKDEEP), 351–385 (NAVTYNIIINKLCKDGLVADAVEIVELMKKRRTRP), 386–416 (DNITYNILLGGLCAKGDLDEASKLLYLMLKD), 423–453 (DVISYNALIHGLCKENRLHQALDIYDLLVEK), 458–492 (DRVTTNILLNSTLKAGDVNKAMELWKQISDSKIVR), 493–527 (NSDTYTAMIDGFCKTGMLNVAKGLLCKMRVSELQP), 528–562 (SVFDYNCLLSSLCKEGSLDQAWRLFEEMQRDNNFP), 563–597 (DVVSFNIMIDGSLKAGDIKSAESLLVGMSRAGLSP), 598–632 (DLFTYSKLINRFLKLGYLDEAISFFDKMVDSGFEP), and 633–667 (DAHICDSVLKYCISQGETDKLTELVKKLVDKDIVL).

Belongs to the PPR family. P subfamily.

The chain is Pentatricopeptide repeat-containing protein At4g28010 from Arabidopsis thaliana (Mouse-ear cress).